The sequence spans 215 residues: Probable phosphoglycerate mutase GpmB (215 aa).

Residues 8–15, 21–22, Arg58, 82–85, 104–105, and 151–152 each bind substrate; these read RHGETQWN, QG, ELDM, RR, and GM. His9 (tele-phosphohistidine intermediate) is an active-site residue. Glu82 (proton donor/acceptor) is an active-site residue.

It belongs to the phosphoglycerate mutase family. GpmB subfamily.

It carries out the reaction (2R)-2-phosphoglycerate = (2R)-3-phosphoglycerate. The protein operates within carbohydrate degradation; glycolysis; pyruvate from D-glyceraldehyde 3-phosphate: step 3/5. In Cronobacter sakazakii (strain ATCC BAA-894) (Enterobacter sakazakii), this protein is Probable phosphoglycerate mutase GpmB.